The chain runs to 330 residues: Aspartate--ammonia ligase (330 aa).

It belongs to the class-II aminoacyl-tRNA synthetase family. AsnA subfamily.

The protein resides in the cytoplasm. The enzyme catalyses L-aspartate + NH4(+) + ATP = L-asparagine + AMP + diphosphate + H(+). It functions in the pathway amino-acid biosynthesis; L-asparagine biosynthesis; L-asparagine from L-aspartate (ammonia route): step 1/1. This Haemophilus ducreyi (strain 35000HP / ATCC 700724) protein is Aspartate--ammonia ligase.